We begin with the raw amino-acid sequence, 109 residues long: MSRISSLQDPFLNALRKEKVSVSVYLVNGIKLQGQVEAFDQFCIVLRNTVNQMVYKHAISTIVPAKSVRMIYNSFNPYHQNSNDEQDENVDDIHSDDLEIQENEGNIHE.

The Sm domain occupies 9–68; it reads DPFLNALRKEKVSVSVYLVNGIKLQGQVEAFDQFCIVLRNTVNQMVYKHAISTIVPAKSV. Positions 77–109 are disordered; the sequence is PYHQNSNDEQDENVDDIHSDDLEIQENEGNIHE.

This sequence belongs to the Hfq family. In terms of assembly, homohexamer.

In terms of biological role, RNA chaperone that binds small regulatory RNA (sRNAs) and mRNAs to facilitate mRNA translational regulation in response to envelope stress, environmental stress and changes in metabolite concentrations. Also binds with high specificity to tRNAs. This chain is RNA-binding protein Hfq, found in Francisella tularensis subsp. tularensis (strain FSC 198).